Consider the following 406-residue polypeptide: Elongation factor Tu-B (406 aa).

The region spanning 10-215 (KPHVNVGTIG…AIDEYIPTPV (206 aa)) is the tr-type G domain. Residues 19 to 26 (GHVDHGKT) are G1. A GTP-binding site is contributed by 19–26 (GHVDHGKT). Position 26 (Thr26) interacts with Mg(2+). A G2 region spans residues 61–65 (GITIN). The interval 82–85 (DCPG) is G3. GTP contacts are provided by residues 82 to 86 (DCPGH) and 137 to 140 (NKVD). Positions 137-140 (NKVD) are G4. Residues 175–177 (SAL) form a G5 region. The residue at position 395 (Thr395) is a Phosphothreonine.

This sequence belongs to the TRAFAC class translation factor GTPase superfamily. Classic translation factor GTPase family. EF-Tu/EF-1A subfamily. In terms of assembly, monomer. Post-translationally, phosphorylated on a threonine.

It localises to the cytoplasm. It catalyses the reaction GTP + H2O = GDP + phosphate + H(+). GTP hydrolase that promotes the GTP-dependent binding of aminoacyl-tRNA to the A-site of ribosomes during protein biosynthesis. Functionally, protects glycyl-tRNA(Gly) from hydrolysis by E.coli D-aminoacyl-tRNA deacylase (dtd). This chain is Elongation factor Tu-B, found in Thermus thermophilus (strain ATCC 27634 / DSM 579 / HB8).